A 212-amino-acid chain; its full sequence is Pyridoxine/pyridoxamine 5'-phosphate oxidase (212 aa).

Substrate-binding positions include 8–11 (RREY) and K66. Residues 61-66 (RIVLLK), 76-77 (FT), R82, K83, and Q105 contribute to the FMN site. Substrate-binding residues include Y123, R127, and S131. Residues 140–141 (QS) and W185 contribute to the FMN site. 191–193 (RLH) is a binding site for substrate. R195 serves as a coordination point for FMN.

Belongs to the pyridoxamine 5'-phosphate oxidase family. As to quaternary structure, homodimer. FMN serves as cofactor.

It catalyses the reaction pyridoxamine 5'-phosphate + O2 + H2O = pyridoxal 5'-phosphate + H2O2 + NH4(+). The catalysed reaction is pyridoxine 5'-phosphate + O2 = pyridoxal 5'-phosphate + H2O2. The protein operates within cofactor metabolism; pyridoxal 5'-phosphate salvage; pyridoxal 5'-phosphate from pyridoxamine 5'-phosphate: step 1/1. Its pathway is cofactor metabolism; pyridoxal 5'-phosphate salvage; pyridoxal 5'-phosphate from pyridoxine 5'-phosphate: step 1/1. In terms of biological role, catalyzes the oxidation of either pyridoxine 5'-phosphate (PNP) or pyridoxamine 5'-phosphate (PMP) into pyridoxal 5'-phosphate (PLP). The sequence is that of Pyridoxine/pyridoxamine 5'-phosphate oxidase from Shewanella pealeana (strain ATCC 700345 / ANG-SQ1).